Here is a 121-residue protein sequence, read N- to C-terminus: MLNRRDCGAAVEVAARRHLERAGLRWLASNVCFRGGELDLVMYDVMSVVFVEVRYRQQESHGSAAQSVDRRKRRKLVMAAQLFLQRHPFLAQVPCRFDVVEGAGRPLQLHWIRDAFRLDDC.

It belongs to the UPF0102 family.

This is UPF0102 protein Xfasm12_1748 from Xylella fastidiosa (strain M12).